The following is an 85-amino-acid chain: V-type proton ATPase subunit f (85 aa).

The Lumenal segment spans residues 1 to 10 (MRPVVSTGKA). Residues 11 to 31 (WCCTVLSAFGVVILSVIAHLF) traverse the membrane as a helical segment. Topologically, residues 32–54 (NTNHESFVGSINDPEDGPAVAHT) are cytoplasmic. A helical membrane pass occupies residues 55–75 (VYLAALVYLVFFVFCGFQVYL). Topologically, residues 76–85 (ARRKPSIELR) are lumenal.

V-ATPase is a heteromultimeric enzyme composed of a peripheral catalytic V1 complex (components A to H) attached to an integral membrane V0 proton pore complex (components: a, c, c', c'', d, e, f and VOA1).

It localises to the endoplasmic reticulum membrane. It is found in the vacuole membrane. Accessory component of the V0 complex of vacuolar(H+)-ATPase (V-ATPase), a multisubunit enzyme composed of a peripheral complex (V1) that hydrolyzes ATP and a membrane integral complex (V0) that translocates protons. V-ATPase is responsible for acidifying and maintaining the pH of intracellular compartments. This Saccharomyces cerevisiae (strain ATCC 204508 / S288c) (Baker's yeast) protein is V-type proton ATPase subunit f.